A 156-amino-acid chain; its full sequence is Regulatory protein RecX (156 aa).

The protein belongs to the RecX family.

It localises to the cytoplasm. Modulates RecA activity. The polypeptide is Regulatory protein RecX (Pseudomonas putida (strain ATCC 700007 / DSM 6899 / JCM 31910 / BCRC 17059 / LMG 24140 / F1)).